A 310-amino-acid polypeptide reads, in one-letter code: Small ribosomal subunit biogenesis GTPase RsgA (310 aa).

Residues 77 to 236 (KNELKRPNIA…IADTPGFSKL (160 aa)) enclose the CP-type G domain. GTP contacts are provided by residues 126-129 (SKID) and 179-187 (GQTGVGKST). Zn(2+) contacts are provided by Cys-260, Cys-266, His-268, and Cys-274.

Belongs to the TRAFAC class YlqF/YawG GTPase family. RsgA subfamily. As to quaternary structure, monomer. Associates with 30S ribosomal subunit, binds 16S rRNA. Zn(2+) is required as a cofactor.

It is found in the cytoplasm. In terms of biological role, one of several proteins that assist in the late maturation steps of the functional core of the 30S ribosomal subunit. Helps release RbfA from mature subunits. May play a role in the assembly of ribosomal proteins into the subunit. Circularly permuted GTPase that catalyzes slow GTP hydrolysis, GTPase activity is stimulated by the 30S ribosomal subunit. The polypeptide is Small ribosomal subunit biogenesis GTPase RsgA (Phytoplasma australiense).